A 445-amino-acid polypeptide reads, in one-letter code: ATP-dependent protease ATPase subunit HslU (445 aa).

ATP is bound by residues Ile-18, 60–65 (GVGKTE), Asp-258, Glu-323, and Arg-395.

Belongs to the ClpX chaperone family. HslU subfamily. A double ring-shaped homohexamer of HslV is capped on each side by a ring-shaped HslU homohexamer. The assembly of the HslU/HslV complex is dependent on binding of ATP.

The protein resides in the cytoplasm. In terms of biological role, ATPase subunit of a proteasome-like degradation complex; this subunit has chaperone activity. The binding of ATP and its subsequent hydrolysis by HslU are essential for unfolding of protein substrates subsequently hydrolyzed by HslV. HslU recognizes the N-terminal part of its protein substrates and unfolds these before they are guided to HslV for hydrolysis. The sequence is that of ATP-dependent protease ATPase subunit HslU from Syntrophotalea carbinolica (strain DSM 2380 / NBRC 103641 / GraBd1) (Pelobacter carbinolicus).